The chain runs to 260 residues: Thiazole synthase (260 aa).

Lys-96 (schiff-base intermediate with DXP) is an active-site residue. 1-deoxy-D-xylulose 5-phosphate is bound by residues Gly-157, 183–184 (AG), and 205–206 (AS).

This sequence belongs to the ThiG family. As to quaternary structure, homotetramer. Forms heterodimers with either ThiH or ThiS.

Its subcellular location is the cytoplasm. The enzyme catalyses [ThiS sulfur-carrier protein]-C-terminal-Gly-aminoethanethioate + 2-iminoacetate + 1-deoxy-D-xylulose 5-phosphate = [ThiS sulfur-carrier protein]-C-terminal Gly-Gly + 2-[(2R,5Z)-2-carboxy-4-methylthiazol-5(2H)-ylidene]ethyl phosphate + 2 H2O + H(+). The protein operates within cofactor biosynthesis; thiamine diphosphate biosynthesis. Functionally, catalyzes the rearrangement of 1-deoxy-D-xylulose 5-phosphate (DXP) to produce the thiazole phosphate moiety of thiamine. Sulfur is provided by the thiocarboxylate moiety of the carrier protein ThiS. In vitro, sulfur can be provided by H(2)S. The protein is Thiazole synthase of Corynebacterium glutamicum (strain ATCC 13032 / DSM 20300 / JCM 1318 / BCRC 11384 / CCUG 27702 / LMG 3730 / NBRC 12168 / NCIMB 10025 / NRRL B-2784 / 534).